The primary structure comprises 403 residues: Leu/Ile/Val-binding protein homolog 8 (403 aa).

The signal sequence occupies residues 1-26 (MRLSRLLIGASLGVALSSTVFTAALA).

This sequence belongs to the leucine-binding protein family.

In terms of biological role, component of an amino-acid transport system. This chain is Leu/Ile/Val-binding protein homolog 8, found in Brucella melitensis biotype 1 (strain ATCC 23456 / CCUG 17765 / NCTC 10094 / 16M).